Consider the following 425-residue polypeptide: Kynurenine/alpha-aminoadipate aminotransferase, mitochondrial (425 aa).

The N-terminal 29 residues, 1–29 (MNYSRFLTATSLARKTSPIRATVEIMSRA), are a transit peptide targeting the mitochondrion. R20 serves as a coordination point for substrate. The residue at position 40 (S40) is a Phosphoserine. Residues Y74 and Y142 each coordinate substrate. N6-succinyllysine is present on K172. N6-acetyllysine is present on K179. Positions 179–188 (KPEDSKDPTK) are enriched in basic and acidic residues. The tract at residues 179 to 208 (KPEDSKDPTKRTPKFLYTIPNGNNPTGNSL) is disordered. Positions 198-208 (PNGNNPTGNSL) are enriched in polar residues. Residue N202 participates in substrate binding. K263 is modified (N6-(pyridoxal phosphate)lysine; alternate). N6-acetyllysine; alternate occurs at positions 263 and 339. N6-succinyllysine; alternate is present on residues K263 and K339. K351 carries the N6-acetyllysine modification. Residue K367 is modified to N6-acetyllysine; alternate. At K367 the chain carries N6-succinyllysine; alternate. R399 is a substrate binding site. K422 is modified (N6-acetyllysine).

It belongs to the class-I pyridoxal-phosphate-dependent aminotransferase family. In terms of assembly, homodimer. Pyridoxal 5'-phosphate serves as cofactor. The N-terminus is blocked.

The protein resides in the mitochondrion. It carries out the reaction L-kynurenine + 2-oxoglutarate = kynurenate + L-glutamate + H2O. The enzyme catalyses L-2-aminoadipate + 2-oxoglutarate = 2-oxoadipate + L-glutamate. It catalyses the reaction glycine + 2-oxoglutarate = glyoxylate + L-glutamate. The catalysed reaction is L-kynurenine + glyoxylate = kynurenate + glycine + H2O. It carries out the reaction 3-hydroxy-L-kynurenine + glyoxylate = xanthurenate + glycine + H2O. The enzyme catalyses 2-oxohexanoate + L-kynurenine = L-2-aminohexanoate + kynurenate + H2O. It catalyses the reaction 3-phenylpyruvate + L-kynurenine = kynurenate + L-phenylalanine + H2O. The catalysed reaction is 4-methylsulfanyl-2-oxobutanoate + L-kynurenine = kynurenate + L-methionine + H2O. It carries out the reaction 2-oxo-3-sulfanylpropanoate + L-kynurenine = kynurenate + L-cysteine + H2O. The enzyme catalyses indole-3-pyruvate + L-kynurenine = kynurenate + L-tryptophan + H2O. It catalyses the reaction 2-oxopentanoate + L-kynurenine = L-2-aminopentanoate + kynurenate + H2O. The catalysed reaction is 4-methyl-2-oxopentanoate + L-kynurenine = kynurenate + L-leucine + H2O. It carries out the reaction glyoxylate + L-methionine = 4-methylsulfanyl-2-oxobutanoate + glycine. The enzyme catalyses L-2-aminoadipate + glyoxylate = 2-oxoadipate + glycine. It catalyses the reaction L-tyrosine + glyoxylate = 3-(4-hydroxyphenyl)pyruvate + glycine. The catalysed reaction is glyoxylate + L-phenylalanine = 3-phenylpyruvate + glycine. It carries out the reaction L-tryptophan + glyoxylate = indole-3-pyruvate + glycine. The enzyme catalyses L-leucine + glyoxylate = 4-methyl-2-oxopentanoate + glycine. It catalyses the reaction 2-oxobutanoate + L-kynurenine = (2S)-2-aminobutanoate + kynurenate + H2O. The catalysed reaction is 2-oxoadipate + L-kynurenine = L-2-aminoadipate + kynurenate + H2O. It carries out the reaction 2-oxoadipate + L-kynurenine = 4-(2-aminophenyl)-2,4-dioxobutanoate + L-2-aminoadipate. Its pathway is amino-acid degradation; L-lysine degradation via saccharopine pathway; glutaryl-CoA from L-lysine: step 4/6. Its function is as follows. Transaminase with broad substrate specificity. Has transaminase activity towards aminoadipate, kynurenine, methionine and glutamate. Shows activity also towards tryptophan, aspartate and hydroxykynurenine. Accepts a variety of oxo-acids as amino-group acceptors, with a preference for 2-oxoglutarate, 2-oxocaproic acid, phenylpyruvate and alpha-oxo-gamma-methiol butyric acid. Can also use glyoxylate as amino-group acceptor (in vitro). This is Kynurenine/alpha-aminoadipate aminotransferase, mitochondrial from Rattus norvegicus (Rat).